A 2506-amino-acid chain; its full sequence is Zinc finger protein 462 (2506 aa).

C2H2-type zinc fingers lie at residues 4–27 (LQCD…QDVH), 108–131 (FQCK…RKVH), and 162–185 (FSCQ…KMYH). Lys-20 is covalently cross-linked (Glycyl lysine isopeptide (Lys-Gly) (interchain with G-Cter in SUMO1); alternate). Lys-20 is covalently cross-linked (Glycyl lysine isopeptide (Lys-Gly) (interchain with G-Cter in SUMO2); alternate). An interaction with PBX1 region spans residues 215–241 (PCKELPAEVVERSILESMVKPLTKSRG). Glycyl lysine isopeptide (Lys-Gly) (interchain with G-Cter in SUMO2) cross-links involve residues Lys-234 and Lys-271. Positions 280–299 (QEGTNLPDVPNKSAPSPTSN) are disordered. 2 O-linked (GlcNAc6P) serine glycosylation sites follow: Ser-292 and Ser-309. Glycyl lysine isopeptide (Lys-Gly) (interchain with G-Cter in SUMO2) cross-links involve residues Lys-337, Lys-347, and Lys-349. The disordered stretch occupies residues 337–356 (KFSPMSYPQMKPKSPHNSGL). A phosphoserine mark is found at Ser-350 and Ser-354. Lys-428 is covalently cross-linked (Glycyl lysine isopeptide (Lys-Gly) (interchain with G-Cter in SUMO2)). 2 C2H2-type zinc fingers span residues 439–462 (FQCP…ENIH) and 470–492 (YKCD…KQCH). Lys-484 is covalently cross-linked (Glycyl lysine isopeptide (Lys-Gly) (interchain with G-Cter in SUMO2)). Positions 535-596 (DPLQQQQPPQ…QPQPPTQAAP (62 aa)) are disordered. Residues 542–593 (PPQPPPPPPPPPPSQPQPLQQPQPPQLQPPHQVPPQPQTQPPPTQQPQPPTQ) are compositionally biased toward pro residues. The C2H2-type 6 zinc-finger motif lies at 600-623 (YKCTMCNYSTTTLKGLRVHQQHKH). Glycyl lysine isopeptide (Lys-Gly) (interchain with G-Cter in SUMO2) cross-links involve residues Lys-631, Lys-657, and Lys-668. The segment at 636 to 661 (PSSLPLENETDSHPSSSNTVKKSQTS) is disordered. A compositionally biased stretch (polar residues) spans 648-661 (HPSSSNTVKKSQTS). The residue at position 688 (Ser-688) is a Phosphoserine. Glycyl lysine isopeptide (Lys-Gly) (interchain with G-Cter in SUMO2) cross-links involve residues Lys-706 and Asp-849. 3 C2H2-type zinc fingers span residues 843 to 866 (YYCK…QRMH), 886 to 908 (YRCL…YGEH), and 925 to 948 (YRCR…QRMH). A Glycyl lysine isopeptide (Lys-Gly) (interchain with G-Cter in SUMO2) cross-link involves residue Lys-986. Residues 1030–1053 (YDCDVCSFASPNMHSVLVHYQKKH) form a C2H2-type 10 zinc finger. Ser-1090 carries the phosphoserine modification. Lys-1135 is covalently cross-linked (Glycyl lysine isopeptide (Lys-Gly) (interchain with G-Cter in SUMO2)). The interval 1157–1186 (MRGVEGPQGSPRPPAPIQQLNRSSSERDGP) is disordered. At Ser-1166 the chain carries Phosphoserine. Glycyl lysine isopeptide (Lys-Gly) (interchain with G-Cter in SUMO2) cross-links involve residues Lys-1206, Lys-1214, Lys-1220, and Lys-1243. 2 consecutive C2H2-type zinc fingers follow at residues 1265 to 1288 (LKCR…KKDH) and 1470 to 1493 (YQCT…GKKH). A Glycyl lysine isopeptide (Lys-Gly) (interchain with G-Cter in SUMO2) cross-link involves residue Lys-1499. The C2H2-type 13 zinc finger occupies 1515 to 1538 (YKCRHCPYINTRIHGVLTHYQKRH). Glycyl lysine isopeptide (Lys-Gly) (interchain with G-Cter in SUMO2) cross-links involve residues Lys-1571 and Lys-1591. C2H2-type zinc fingers lie at residues 1577-1600 (YRCK…EKYH), 1660-1683 (FRCQ…RIKH), and 1697-1720 (FKCA…QKRH). Residues Lys-1698 and Lys-1780 each participate in a glycyl lysine isopeptide (Lys-Gly) (interchain with G-Cter in SUMO2) cross-link. A C2H2-type 17 zinc finger spans residues 1892 to 1914 (YQCKHCDSKLQSTAELTSHLNIH). Lys-1946 participates in a covalent cross-link: Glycyl lysine isopeptide (Lys-Gly) (interchain with G-Cter in SUMO2). The segment at 1968–1992 (YKCKFCVEVHPTLRAICNHLRKHVQ) adopts a C2H2-type 18; degenerate zinc-finger fold. N6-methyllysine is present on Lys-2004. C2H2-type zinc fingers lie at residues 2025-2048 (YSCQ…QTHH), 2054-2077 (FRCK…LKAH), and 2083-2106 (YKCS…LKVH). Lys-2104 participates in a covalent cross-link: Glycyl lysine isopeptide (Lys-Gly) (interchain with G-Cter in SUMO2). Residues 2122–2152 (SSHSHHSSQKATPAEEVEDSNDSSYSEPPDV) are disordered. Polar residues predominate over residues 2143–2152 (DSSYSEPPDV). Residues Ser-2172 and Ser-2177 each carry the phosphoserine modification. 3 consecutive C2H2-type zinc fingers follow at residues 2191-2214 (LHCE…RDKH), 2220-2243 (FKCK…EAGH), and 2254-2276 (LRCP…IVLH). A Glycyl lysine isopeptide (Lys-Gly) (interchain with G-Cter in SUMO2) cross-link involves residue Lys-2293. C2H2-type zinc fingers lie at residues 2300–2322 (FRCD…IEKH) and 2328–2351 (YKCQ…RDEH). The interval 2371–2396 (MKEKMESSSSDDEDKEEEMNSKAEDR) is disordered. The segment at 2414–2436 (FPCEFCGRAFSQGSEWERHVLRH) adopts a C2H2-type 27 zinc-finger fold. Glycyl lysine isopeptide (Lys-Gly) (interchain with G-Cter in SUMO2) cross-links involve residues Lys-2444 and Lys-2504.

In terms of assembly, interacts with PBX1; this interaction prevents PBX1-HOXA9 heterodimer from forming and binding to DNA. In terms of processing, O-GlcNAcylated with O-GlcNAc-6-phosphate.

The protein localises to the nucleus. Functionally, zinc finger nuclear factor involved in transcription by regulating chromatin structure and organization. Involved in the pluripotency and differentiation of embryonic stem cells by regulating SOX2, POU5F1/OCT4, and NANOG. By binding PBX1, prevents the heterodimerization of PBX1 and HOXA9 and their binding to DNA. Regulates neuronal development and neural cell differentiation. The polypeptide is Zinc finger protein 462 (Homo sapiens (Human)).